Here is a 181-residue protein sequence, read N- to C-terminus: Large ribosomal subunit protein uL5 (181 aa).

This sequence belongs to the universal ribosomal protein uL5 family. As to quaternary structure, part of the 50S ribosomal subunit; part of the 5S rRNA/L5/L18/L25 subcomplex. Contacts the 5S rRNA and the P site tRNA. Forms a bridge to the 30S subunit in the 70S ribosome.

Its function is as follows. This is one of the proteins that bind and probably mediate the attachment of the 5S RNA into the large ribosomal subunit, where it forms part of the central protuberance. In the 70S ribosome it contacts protein S13 of the 30S subunit (bridge B1b), connecting the 2 subunits; this bridge is implicated in subunit movement. Contacts the P site tRNA; the 5S rRNA and some of its associated proteins might help stabilize positioning of ribosome-bound tRNAs. This Mesomycoplasma hyopneumoniae (strain 7448) (Mycoplasma hyopneumoniae) protein is Large ribosomal subunit protein uL5.